A 400-amino-acid polypeptide reads, in one-letter code: 3-phenylpropionate/cinnamic acid dioxygenase ferredoxin--NAD(+) reductase component (400 aa).

Residue 5-36 coordinates FAD; sequence TIIIVGGGQAAAMAAASLRQQGFTGELHLFSD. 146-174 contributes to the NAD(+) binding site; sequence SVVIVGAGTIGLELAASATQRRCKVTVIE.

This sequence belongs to the bacterial ring-hydroxylating dioxygenase ferredoxin reductase family. As to quaternary structure, this dioxygenase system consists of four proteins: the two subunits of the hydroxylase component (HcaE and HcaF), a ferredoxin (HcaC) and a ferredoxin reductase (HcaD). It depends on FAD as a cofactor.

The enzyme catalyses 2 reduced [2Fe-2S]-[ferredoxin] + NAD(+) + H(+) = 2 oxidized [2Fe-2S]-[ferredoxin] + NADH. It participates in aromatic compound metabolism; 3-phenylpropanoate degradation. Functionally, part of the multicomponent 3-phenylpropionate dioxygenase, that converts 3-phenylpropionic acid (PP) and cinnamic acid (CI) into 3-phenylpropionate-dihydrodiol (PP-dihydrodiol) and cinnamic acid-dihydrodiol (CI-dihydrodiol), respectively. The chain is 3-phenylpropionate/cinnamic acid dioxygenase ferredoxin--NAD(+) reductase component from Escherichia coli (strain 55989 / EAEC).